Reading from the N-terminus, the 583-residue chain is Thiol:disulfide interchange protein DsbD (583 aa).

The first 18 residues, 1 to 18 (MRRLFLLLFMLFTTLAHA), serve as a signal peptide directing secretion. Disulfide bonds link cysteine 118–cysteine 124 and cysteine 186–cysteine 306. The next 8 helical transmembrane spans lie at 168-188 (GLGLLAFFGFGLLLAFAPCSL), 214-234 (SYVLCMALVYAGMGVIAALLG), 245-265 (WVLGSFAALFVLLSLPMFGFF), 289-309 (LIGCGILGALSALLVGPCMTA), 326-346 (FGGLALFALGLGIGLPLLLLV), 359-379 (WMNLLKGVFGILFLGTAIYML), 382-402 (VLNPGLWMGLWGALALVVAYC), and 413-433 (LLHLFGAGALLFAAWGGMLLV). A Thioredoxin domain is found at 458 to 581 (VTAHDAFTTV…FLQRWTQTRE (124 aa)). A disulfide bond links cysteine 496 and cysteine 499.

The protein belongs to the thioredoxin family. DsbD subfamily.

Its subcellular location is the cell inner membrane. It catalyses the reaction [protein]-dithiol + NAD(+) = [protein]-disulfide + NADH + H(+). The enzyme catalyses [protein]-dithiol + NADP(+) = [protein]-disulfide + NADPH + H(+). Required to facilitate the formation of correct disulfide bonds in some periplasmic proteins and for the assembly of the periplasmic c-type cytochromes. Acts by transferring electrons from cytoplasmic thioredoxin to the periplasm. This transfer involves a cascade of disulfide bond formation and reduction steps. This chain is Thiol:disulfide interchange protein DsbD, found in Pseudomonas fluorescens (strain ATCC BAA-477 / NRRL B-23932 / Pf-5).